Consider the following 573-residue polypeptide: Solute carrier family 41 member 2 (573 aa).

At 1 to 162 (MTNSKGRSIT…KESSGIMALQ (162 aa)) the chain is on the extracellular side. A phosphoserine mark is found at serine 136 and serine 137. Residues 163–183 (ILVPFLLAGFGTVSAGMVLDI) traverse the membrane as a helical segment. The Cytoplasmic portion of the chain corresponds to 184-195 (VQHWEVFRKVTE). The helical transmembrane segment at 196-216 (VFILVPALLGLKGNLEMTLAS) threads the bilayer. Over 217–245 (RLSTAVNIGKMDSPIEKWNLIIGNLALKQ) the chain is Extracellular. The helical transmembrane segment at 246–266 (VQATVVGFLAAVAAIILGWIP) threads the bilayer. The Cytoplasmic segment spans residues 267 to 282 (EGKYYLDHSILLCSSS). The chain crosses the membrane as a helical span at residues 283-303 (VATAFIASLLQGIIMVGVIVG). Residues 304-313 (SKKTGINPDN) lie on the Extracellular side of the membrane. Residues 314–334 (VATPIAASFGDLITLAILAWI) traverse the membrane as a helical segment. Residues 335–347 (SQGLYSCLETYYY) are Cytoplasmic-facing. Residues 348–368 (ISPLVGVFFLALTPIWIIIAA) traverse the membrane as a helical segment. The Extracellular segment spans residues 369-376 (KHPATRTV). A helical membrane pass occupies residues 377 to 397 (LHSGWEPVITAMVISSIGGLI). The Cytoplasmic portion of the chain corresponds to 398–406 (LDTTVSDPN). A helical transmembrane segment spans residues 407–427 (LVGIVVYTPVINGIGGNLVAI). Over 428–469 (QASRISTYLHLHSIPGELPDEPKGCYYPFRTFFGPGVNNKSA) the chain is Extracellular. A helical membrane pass occupies residues 470–490 (QVLLLLVIPGHLIFLYTIHLM). Residues 491–498 (KSGHTSLT) are Cytoplasmic-facing. Residues 499 to 519 (IIFIVVYLFGAVLQVFTLLWI) traverse the membrane as a helical segment. Residues 520 to 543 (ADWMVHHFWRKGKDPDSFSIPYLT) lie on the Extracellular side of the membrane. A helical transmembrane segment spans residues 544–564 (ALGDLLGTALLALSFHFLWLI). At 565–573 (GDRDGDVGD) the chain is on the cytoplasmic side.

This sequence belongs to the SLC41A transporter family.

It localises to the cell membrane. The enzyme catalyses Mg(2+)(in) = Mg(2+)(out). The catalysed reaction is Mn(2+)(in) = Mn(2+)(out). It carries out the reaction Co(2+)(in) = Co(2+)(out). It catalyses the reaction Ni(2+)(in) = Ni(2+)(out). The enzyme catalyses Fe(2+)(in) = Fe(2+)(out). In terms of biological role, acts as a plasma-membrane magnesium transporter. Can also mediate the transport of other divalent metal cations in an order of Ba(2+) &gt; Ni(2+) &gt; Co(2+) &gt; Fe(2+) &gt; Mn(2+). In Homo sapiens (Human), this protein is Solute carrier family 41 member 2 (SLC41A2).